Reading from the N-terminus, the 532-residue chain is Protein DETOXIFICATION 48 (532 aa).

The next 12 helical transmembrane spans lie at 65–85 (ISGP…ISML), 95–115 (LAGG…VISG), 136–156 (LGLT…PISF), 174–194 (ISSV…LLSL), 211–231 (VTYS…LLVV), 235–255 (MGVA…VVLL), 279–301 (GWSA…WWWY), 322–342 (GILI…SLGV), 363–383 (IISL…AVLV), 397–417 (ILQL…GNCP), 437–457 (INLG…GFVF), and 464–484 (LWFG…CALL). Positions 496-532 (EELTSQTPGKSPPLLPIASSKSRSTSGTEDMMRTMLV) are disordered. Over residues 514–523 (SSKSRSTSGT) the composition is skewed to polar residues.

The protein belongs to the multi antimicrobial extrusion (MATE) (TC 2.A.66.1) family. In terms of tissue distribution, highly expressed in shoot apices relative to leaves. At vegetative stages, highly expressed at the stipules. At reproductive stages, most highly expressed in the mature pollen. Also expressed in the tips of sepals.

The protein localises to the golgi apparatus membrane. It localises to the late endosome membrane. Functions as a multidrug and toxin extrusion transporter. Contributes to iron homeostasis during stress responses and senescence. Could be involved in specifying the lateral organ initiation rate. May act as a negative regulator of hypocotyl cell elongation in the light. The chain is Protein DETOXIFICATION 48 from Arabidopsis thaliana (Mouse-ear cress).